The primary structure comprises 716 residues: MAQNSPQLDIQVLHDLRQRFPEIPEGVVSQCMLQNNNNLEACCRALSQESSKYLYMEYHSPEDNRMNRNRLLHINLGIHSPSSYHPGDGAHLNGGRTLVHSSSDGHIDPQHTAGKQLICLVQEPHSAPAVVAATPNYNPFFMNEQNRSAATPPSQPPQQPSSMQTGMNPSAMQGPSPPPPPPSYMHIPRYSTNPITVTVSQNLPSGQTVPRALQILPQIPSNLYGSPGSIFIRQTSQSSSGRQTPQNAPWQSSPQGPVPHYSQRPLPVYPHQQNYQPSQYSPKQQQIPQSVYHSPPPSQCPSPFSSPQHQVQPPQLGHPSSHVFMPPSPSTTPPHLYQQGPPSYQKPGSHSVAYLPYTASSLPKGSMKKIEITVEPSQRPGTAITRSPSPISNQPSPRNQHSLYTATTPPSSSPSRGISSQPKPPFSVNPVYITYTQPTGPSCAPSPSPRVIPNPTTVFKITVGRATTENLLNLVDQEERSAAPEPIQPISVIPGSGGEKGNHKYQRSSSSGSDDYAYTQALLLHQRARMERLAKQLKLEKEELERLKAEVNSMEHDLMQRRLRRVSCTTAIPTPEEMTRLRSTNRQLQINVDCTLKEVDLLQSRGNFDPKAINNFYDHIEPGPVVPPKPSKKDSSDSCAIERKARRISVTSKAPVDIHDAQAAAADEHLSICKQSARTQPRDEDYEGAPWNCDSCTFLNHPALNRCEQCEMPRYT.

A2 is subject to N-acetylalanine. The CUE domain occupies 8–51 (LDIQVLHDLRQRFPEIPEGVVSQCMLQNNNNLEACCRALSQESS). Phosphoserine occurs at positions 60, 101, and 103. Disordered stretches follow at residues 141-189 (FMNE…HIPR), 227-349 (PGSI…KPGS), 373-433 (TVEP…PVYI), and 479-513 (ERSA…SSGS). Over residues 163–173 (MQTGMNPSAMQ) the composition is skewed to polar residues. 2 stretches are compositionally biased toward low complexity: residues 233-246 (RQTS…QTPQ) and 269-290 (YPHQ…IPQS). The span at 375 to 408 (EPSQRPGTAITRSPSPISNQPSPRNQHSLYTATT) shows a compositional bias: polar residues. S389 is subject to Phosphoserine. The residue at position 408 (T408) is a Phosphothreonine. Over residues 409–421 (PPSSSPSRGISSQ) the composition is skewed to low complexity. 2 positions are modified to phosphoserine: S413 and S496. Position 510 is a phosphoserine; by MAPKAPK2 and MAPKAPK3 (S510). A coiled-coil region spans residues 521-564 (ALLLHQRARMERLAKQLKLEKEELERLKAEVNSMEHDLMQRRLR). A RanBP2-type zinc finger spans residues 686–716 (YEGAPWNCDSCTFLNHPALNRCEQCEMPRYT).

As to quaternary structure, interacts with TAB1, TAB2, MAP3K7, TRAF2 and TRAF6. The minimal TAB3-containing complex (TAB1-MAP3K7-TAB3) appears not to contain TAB2. However, it seems sensible to consider that TAB2 may also join this complex and may act in a cooperative manner with TAB3. Interacts with DYNC2I2 (via the WD domains). Interacts with RBCK1. Binds 'Lys-63'-linked polyubiquitin chains. Interacts with TRIM5. Interacts with TRIM38 (via B30.2/SPRY domain), leading to its translocation to lysosomes and degradation. Interacts with ASB1. Post-translationally, ubiquitinated; following IL1 stimulation or TRAF6 overexpression. Ubiquitinated by AMFR via 'Lys-27'-linked polyubiquitination; leading to TAK1/MAP3K7 activation. Degraded in a lysosome-dependent manner following interaction with TRIM38. In terms of processing, phosphorylated at Ser-510 by MAPKAPK2 and MAPKAPK3 following IL1 treatment.

Adapter required to activate the JNK and NF-kappa-B signaling pathways through the specific recognition of 'Lys-63'-linked polyubiquitin chains by its RanBP2-type zinc finger (NZF). Acts as an adapter linking MAP3K7/TAK1 and TRAF6 to 'Lys-63'-linked polyubiquitin chains. The RanBP2-type zinc finger (NZF) specifically recognizes Lys-63'-linked polyubiquitin chains unanchored or anchored to the substrate proteins such as RIPK1/RIP1 and RIPK2: this acts as a scaffold to organize a large signaling complex to promote autophosphorylation of MAP3K7/TAK1, and subsequent activation of I-kappa-B-kinase (IKK) core complex by MAP3K7/TAK1. The chain is TGF-beta-activated kinase 1 and MAP3K7-binding protein 3 (Tab3) from Mus musculus (Mouse).